Reading from the N-terminus, the 1188-residue chain is DNA-directed RNA polymerase II subunit 2 (1188 aa).

Asp-800 contributes to the Mg(2+) binding site. Disordered regions lie at residues Ser-852–Glu-871 and Lys-877–Asp-897. A compositionally biased stretch (polar residues) spans Thr-879–Arg-892. Positions 1124, 1127, 1142, and 1145 each coordinate Zn(2+). The C4-type zinc finger occupies Cys-1124–Cys-1145.

Belongs to the RNA polymerase beta chain family. As to quaternary structure, component of the RNA polymerase II complex consisting of at least 12 subunits.

The protein resides in the nucleus. The enzyme catalyses RNA(n) + a ribonucleoside 5'-triphosphate = RNA(n+1) + diphosphate. Its function is as follows. DNA-dependent RNA polymerase catalyzes the transcription of DNA into RNA using the four ribonucleoside triphosphates as substrates. Second largest component of RNA polymerase II which synthesizes mRNA precursors and many functional non-coding RNAs. Proposed to contribute to the polymerase catalytic activity and forms the polymerase active center together with the largest subunit. Pol II is the central component of the basal RNA polymerase II transcription machinery. It is composed of mobile elements that move relative to each other. NRPB2 is part of the core element with the central large cleft, the clamp element that moves to open and close the cleft and the jaws that are thought to grab the incoming DNA template. Essential for the completion of the three rounds of mitosis in female megaspores required for the development of mature gametophytes. The protein is DNA-directed RNA polymerase II subunit 2 (NRPB2) of Arabidopsis thaliana (Mouse-ear cress).